The following is a 445-amino-acid chain: Exodeoxyribonuclease 7 large subunit (445 aa).

This sequence belongs to the XseA family. In terms of assembly, heterooligomer composed of large and small subunits.

Its subcellular location is the cytoplasm. The catalysed reaction is Exonucleolytic cleavage in either 5'- to 3'- or 3'- to 5'-direction to yield nucleoside 5'-phosphates.. In terms of biological role, bidirectionally degrades single-stranded DNA into large acid-insoluble oligonucleotides, which are then degraded further into small acid-soluble oligonucleotides. The polypeptide is Exodeoxyribonuclease 7 large subunit (Xanthomonas axonopodis pv. citri (strain 306)).